A 123-amino-acid polypeptide reads, in one-letter code: Small ribosomal subunit protein uS12 (123 aa).

Residue aspartate 89 is modified to 3-methylthioaspartic acid. Residues 100 to 123 form a disordered region; it reads GSLDTSGVKDRKQGRSKYGTKRPK. Positions 113–123 are enriched in basic residues; it reads GRSKYGTKRPK.

The protein belongs to the universal ribosomal protein uS12 family. Part of the 30S ribosomal subunit. Contacts proteins S8 and S17. May interact with IF1 in the 30S initiation complex.

Functionally, with S4 and S5 plays an important role in translational accuracy. Its function is as follows. Interacts with and stabilizes bases of the 16S rRNA that are involved in tRNA selection in the A site and with the mRNA backbone. Located at the interface of the 30S and 50S subunits, it traverses the body of the 30S subunit contacting proteins on the other side and probably holding the rRNA structure together. The combined cluster of proteins S8, S12 and S17 appears to hold together the shoulder and platform of the 30S subunit. The chain is Small ribosomal subunit protein uS12 from Ectopseudomonas mendocina (strain ymp) (Pseudomonas mendocina).